Here is a 346-residue protein sequence, read N- to C-terminus: MVDWELMKKIIESPGVSGYEHLGIRDLVVDILKDVADEVKIDKLGNVIAHFKGSAPKVMVAAHMDKIGLMVNHIDKDGYLRVVPIGGVLPETLIAQKIRFFTEKGERYGVVGVLPPHLRREAKDQGGKIDWDSIIVDVGASSREEAEEMGFRIGTIGEFAPNFTRLSEHRFATPYLDDRICLYAMIEAARQLGEHEADIYIVASVQEEIGLRGARVASFAIDPEVGIAMDVTFAKQPNDKGKIVPELGKGPVMDVGPNINPKLRQFADEVAKKYEIPLQVEPSPRPTGTDANVMQINREGVATAVLSIPIRYMHSQVELADARDVDNTIKLAKALLEELKPMDFTP.

Zn(2+)-binding residues include histidine 63 and aspartate 177. Catalysis depends on glutamate 207, which acts as the Proton acceptor. Zn(2+)-binding residues include glutamate 208, aspartate 230, and histidine 314.

As to quaternary structure, homotetramer. Zn(2+) serves as cofactor.

The enzyme catalyses Preferentially, release of N-terminal lysine.. Functionally, hydrolyzes di-, tri- and tetrapeptides with a lysine as the N-terminal amino acid and with Gly, Lys, Ala, Phe or Glu in the second position. This is Lysyl aminopeptidase from Pyrococcus furiosus (strain ATCC 43587 / DSM 3638 / JCM 8422 / Vc1).